We begin with the raw amino-acid sequence, 114 residues long: Large ribosomal subunit protein bL20 (114 aa).

It belongs to the bacterial ribosomal protein bL20 family.

Its function is as follows. Binds directly to 23S ribosomal RNA and is necessary for the in vitro assembly process of the 50S ribosomal subunit. It is not involved in the protein synthesizing functions of that subunit. The chain is Large ribosomal subunit protein bL20 from Flavobacterium psychrophilum (strain ATCC 49511 / DSM 21280 / CIP 103535 / JIP02/86).